The following is a 293-amino-acid chain: Cep170-like protein (293 aa).

Disordered regions lie at residues 78–110 (PPLV…LTIT) and 217–270 (FPSA…AESE). Over residues 227 to 245 (KQKSSPVNNHHSPGQTPTL) the composition is skewed to polar residues.

This sequence belongs to the CEP170 family.

This chain is Cep170-like protein (CEP170P1), found in Homo sapiens (Human).